The sequence spans 543 residues: Carboxypeptidase Y homolog A (543 aa).

The signal sequence occupies residues Met1 to Ala17. A propeptide spanning residues Gln18–Lys124 is cleaved from the precursor. 5 cysteine pairs are disulfide-bonded: Cys179–Cys419, Cys313–Cys327, Cys337–Cys360, Cys344–Cys353, and Cys382–Cys389. Asn210 carries an N-linked (GlcNAc...) asparagine glycan. Ser266 is an active-site residue. Asp458 is a catalytic residue. The N-linked (GlcNAc...) asparagine glycan is linked to Asn509. His520 is an active-site residue.

Belongs to the peptidase S10 family.

It is found in the vacuole. The catalysed reaction is Release of a C-terminal amino acid with broad specificity.. In terms of biological role, vacuolar carboxypeptidase involved in degradation of small peptides. Digests preferentially peptides containing an aliphatic or hydrophobic residue in P1' position, as well as methionine, leucine or phenylalanine in P1 position of ester substrate. The chain is Carboxypeptidase Y homolog A (CPYA) from Arthroderma gypseum (strain ATCC MYA-4604 / CBS 118893) (Microsporum gypseum).